Here is a 74-residue protein sequence, read N- to C-terminus: Protein SlyX homolog (74 aa).

Belongs to the SlyX family.

The protein is Protein SlyX homolog of Aliivibrio salmonicida (strain LFI1238) (Vibrio salmonicida (strain LFI1238)).